A 481-amino-acid polypeptide reads, in one-letter code: Small ribosomal subunit protein bS1 (481 aa).

S1 motif domains follow at residues 36–105, 123–188, 209–277, and 294–363; these read GDIV…LSKK, DEAV…LSRR, GAIR…LSLK, and GQIV…LSLK. Residues 437 to 465 are disordered; that stretch reads ATEEAGHGSSEQPPASSTPSAKATGGSLA. Polar residues predominate over residues 445–457; it reads SSEQPPASSTPSA.

Belongs to the bacterial ribosomal protein bS1 family.

Its function is as follows. Binds mRNA; thus facilitating recognition of the initiation point. It is needed to translate mRNA with a short Shine-Dalgarno (SD) purine-rich sequence. The protein is Small ribosomal subunit protein bS1 (rpsA) of Mycobacterium leprae (strain TN).